The chain runs to 296 residues: Light-independent protochlorophyllide reductase iron-sulfur ATP-binding protein (296 aa).

Residues 39–44 (GIGKST) and lysine 68 each bind ATP. Residue serine 43 coordinates Mg(2+). [4Fe-4S] cluster-binding residues include cysteine 124 and cysteine 158. An ATP-binding site is contributed by 209-210 (NR).

This sequence belongs to the NifH/BchL/ChlL family. As to quaternary structure, homodimer. Protochlorophyllide reductase is composed of three subunits; ChlL, ChlN and ChlB. [4Fe-4S] cluster serves as cofactor.

It catalyses the reaction chlorophyllide a + oxidized 2[4Fe-4S]-[ferredoxin] + 2 ADP + 2 phosphate = protochlorophyllide a + reduced 2[4Fe-4S]-[ferredoxin] + 2 ATP + 2 H2O. The protein operates within porphyrin-containing compound metabolism; chlorophyll biosynthesis (light-independent). Functionally, component of the dark-operative protochlorophyllide reductase (DPOR) that uses Mg-ATP and reduced ferredoxin to reduce ring D of protochlorophyllide (Pchlide) to form chlorophyllide a (Chlide). This reaction is light-independent. The L component serves as a unique electron donor to the NB-component of the complex, and binds Mg-ATP. This chain is Light-independent protochlorophyllide reductase iron-sulfur ATP-binding protein, found in Prochlorococcus marinus (strain SARG / CCMP1375 / SS120).